Here is a 140-residue protein sequence, read N- to C-terminus: Large ribosomal subunit protein bL17 (140 aa).

The segment at 121 to 140 (AAKGLDSGPTAEANDDDSEE) is disordered.

This sequence belongs to the bacterial ribosomal protein bL17 family. In terms of assembly, part of the 50S ribosomal subunit. Contacts protein L32.

The polypeptide is Large ribosomal subunit protein bL17 (Rhodospirillum rubrum (strain ATCC 11170 / ATH 1.1.1 / DSM 467 / LMG 4362 / NCIMB 8255 / S1)).